The following is a 332-amino-acid chain: Arabinogalactan endo-beta-1,4-galactanase (332 aa).

Asparagine 111 is a glycosylation site (N-linked (GlcNAc...) asparagine). Glutamate 135 (proton donor) is an active-site residue. Glutamate 245 (nucleophile) is an active-site residue.

Belongs to the glycosyl hydrolase 53 family.

The catalysed reaction is The enzyme specifically hydrolyzes (1-&gt;4)-beta-D-galactosidic linkages in type I arabinogalactans.. The sequence is that of Arabinogalactan endo-beta-1,4-galactanase from Humicola insolens (Soft-rot fungus).